The chain runs to 264 residues: Ribosomal RNA small subunit methyltransferase A (264 aa).

Residues N12, L14, G40, E61, D86, and N105 each coordinate S-adenosyl-L-methionine.

Belongs to the class I-like SAM-binding methyltransferase superfamily. rRNA adenine N(6)-methyltransferase family. RsmA subfamily.

Its subcellular location is the cytoplasm. It catalyses the reaction adenosine(1518)/adenosine(1519) in 16S rRNA + 4 S-adenosyl-L-methionine = N(6)-dimethyladenosine(1518)/N(6)-dimethyladenosine(1519) in 16S rRNA + 4 S-adenosyl-L-homocysteine + 4 H(+). Specifically dimethylates two adjacent adenosines (A1518 and A1519) in the loop of a conserved hairpin near the 3'-end of 16S rRNA in the 30S particle. May play a critical role in biogenesis of 30S subunits. This chain is Ribosomal RNA small subunit methyltransferase A, found in Fusobacterium nucleatum subsp. nucleatum (strain ATCC 25586 / DSM 15643 / BCRC 10681 / CIP 101130 / JCM 8532 / KCTC 2640 / LMG 13131 / VPI 4355).